The chain runs to 40 residues: Light-harvesting protein B800/830/1020 beta-1 chain (40 aa).

Topologically, residues 1–20 (ANDIRPLRDFEDEEAQEFHQ) are cytoplasmic. A bacteriochlorophyll is bound by residues His19 and His37. The chain crosses the membrane as a helical span at residues 21–40 (AAVQAFFLYVAVAFVAHLPV).

This sequence belongs to the antenna complex beta subunit family. In terms of assembly, the core complex is formed by different alpha and beta chains, binding bacteriochlorophyll molecules, and arranged most probably in tetrameric structures disposed around the reaction center. The non-pigmented gamma chains may constitute additional components.

Its subcellular location is the cell inner membrane. Antenna complexes are light-harvesting systems, which transfer the excitation energy to the reaction centers. The chain is Light-harvesting protein B800/830/1020 beta-1 chain from Halorhodospira halochloris (Ectothiorhodospira halochloris).